Reading from the N-terminus, the 383-residue chain is Ovalbumin (383 aa).

The residue at position 2 (G2) is an N-acetylglycine. Positions H22–D48 form a signal peptide, not cleaved. The residue at position 69 (S69) is a Phosphoserine. C74 and C121 are oxidised to a cystine. N-linked (GlcNAc...) asparagine glycans are attached at residues N293 and N312. A Phosphoserine modification is found at S345.

This sequence belongs to the serpin family. Ov-serpin subfamily. Post-translationally, the signal sequence is not cleaved. The functional signal for membrane translocation of ovalbumin becomes accessible when the nascent chain is 50 to 60 residues long. The hydrophobic sequence which lies between residues 27 and 43 folds back on the preceding residues to form an amphipathic hairpin structure which is the signal element recognized by the membrane. As to expression, major protein of egg white.

The protein resides in the secreted. In terms of biological role, storage protein of egg white. Lack protease inhibitory activity. In Coturnix coturnix (Common quail), this protein is Ovalbumin (SERPINB14).